Consider the following 475-residue polypeptide: Ammonium transporter Rh type C (475 aa).

Over 1 to 20 (MGCVQSFRNFCDRPKNTNVR) the chain is Cytoplasmic. The helical transmembrane segment at 21-41 (ISLPAVCFVWQIAMIILFGVF) threads the bilayer. The Extracellular portion of the chain corresponds to 42–73 (IRYNEEADTHWVEYRKKENISSDIENDFYFRY). Asn-60 is a glycosylation site (N-linked (GlcNAc...) asparagine). A helical transmembrane segment spans residues 74 to 94 (PSFQDVHVMIFVGFGFLMTFL). The Cytoplasmic segment spans residues 95 to 98 (KRYS). The helical transmembrane segment at 99–119 (FGAVGFNFLIAAFGLQWALLM) threads the bilayer. Over 120–138 (QGWFHSLDYTDGKIKIGIE) the chain is Extracellular. The chain crosses the membrane as a helical span at residues 139–159 (NLINADFCVAGCLIAYGAVLG). Topologically, residues 160–167 (KVSPVQLM) are cytoplasmic. The helical transmembrane segment at 168–188 (VLTLFGITLFAVEEYIILNLI) threads the bilayer. Over 189–193 (HARDA) the chain is Extracellular. The chain crosses the membrane as a helical span at residues 194 to 214 (GGSMVIHTFGGYYGLSISWML). Over 215 to 233 (YRPNLEQSSNLQGSVYQSD) the chain is Cytoplasmic. Residues 234-254 (VFAMIGTLFLWMFWPSFNSAI) form a helical membrane-spanning segment. Topologically, residues 255 to 265 (TDHGDGQHRAA) are extracellular. Residues 266–286 (INTYLALASTVLTTVAISSLF) traverse the membrane as a helical segment. The Cytoplasmic segment spans residues 287 to 299 (QKHGKLDMVHIQN). The chain crosses the membrane as a helical span at residues 300–320 (STLAGGVAVGTAAEFMLMPYG). Residue Ser-321 is a topological domain, extracellular. Residues 322-342 (LIVGFCCGIISTLGYIYLTPF) traverse the membrane as a helical segment. Residues 343 to 357 (MEKYLKIQDTCGIHN) lie on the Cytoplasmic side of the membrane. The chain crosses the membrane as a helical span at residues 358 to 378 (LHAMPGLIGGIVGAITAAAAT). Residues 379-410 (ESVYGKEGLVNTFDFVGPFKNMVPTTQGGHQA) are Extracellular-facing. Residues 411–431 (AGLCVAICFGIGGGIMVGCIL) traverse the membrane as a helical segment. The Cytoplasmic portion of the chain corresponds to 432-475 (RLPIWCDPADDNCFNDEPYWELPEEEEIIPPILHYNNHMVNKDV).

Belongs to the ammonium transporter (TC 2.A.49) family. Rh subfamily. Homotrimer.

It is found in the apical cell membrane. Functionally, functions as an ammonia transporter. May play a role in the elimination of ammonia in the gill. This Tetraodon nigroviridis (Spotted green pufferfish) protein is Ammonium transporter Rh type C (rhcg).